Reading from the N-terminus, the 1841-residue chain is Cell division control protein 12 (1841 aa).

Composition is skewed to polar residues over residues 1 to 25 (MRNSSKGQDPNFSYDSILSTPTPSA) and 46 to 63 (SIESVSTLIQPNKSQSVT). Disordered regions lie at residues 1–63 (MRNS…QSVT), 78–134 (NSHN…GPRL), and 152–181 (PPVHSRSFDPLPKPPVPSVPVSKTKRRTKH). The GBD/FH3 domain maps to 232–620 (TRPPSLDQLI…RILLNSKVSN (389 aa)). The stretch at 674-715 (LGAEDLIAKLNKEVEDQKDVILSQKRTNETLKTEIDALQKSH) forms a coiled coil. The FH1 domain maps to 740 to 972 (GSTNSKERII…VSPAVSNNIS (233 aa)). The region spanning 980-1391 (TGLTRRPTRR…QHRRLNLVNN (412 aa)) is the FH2 domain. Residues 1260–1290 (TEAAKLNIEAIEQECSELIRGCQNLQIDCDS) adopt a coiled-coil conformation. Disordered stretches follow at residues 1445–1661 (EAPN…ENNL), 1696–1715 (TTTTISTARAKPGNNDINTI), and 1735–1758 (KSNKFSGTNDLNFQQATKPDGSNK). 2 stretches are compositionally biased toward polar residues: residues 1447 to 1456 (PNTSTKSSPA) and 1483 to 1497 (SESTDGLSDALNITP). A compositionally biased stretch (basic and acidic residues) spans 1499–1516 (KKGEVSSKAKKGYNYEKR). The span at 1539 to 1553 (GRSASYTFSDPSSLE) shows a compositional bias: polar residues. Position 1541 is a phosphoserine (S1541). Residue Y1544 is modified to Phosphotyrosine. Residues 1554-1567 (DSNRQKPFNGEKFR) are compositionally biased toward basic and acidic residues. The span at 1568–1577 (RFSSKSRRGS) shows a compositional bias: basic residues. Positions 1594–1604 (INNNQTSPQNK) are enriched in polar residues. Residues 1605–1621 (PSKESLKSDTISNEKKV) show a composition bias toward basic and acidic residues. Over residues 1630-1641 (NLLTPTISNGTR) the composition is skewed to polar residues.

The protein belongs to the formin homology family. BNI1 subfamily. In terms of assembly, interacts with profilin and actin at the FH1 and FH2 domains respectively.

The protein localises to the nucleus. Its function is as follows. Plays a role in the cell cycle. Involved in cytokinesis. Component of the cell division ring. In the absence of profilin, caps the barbed end of actin filaments, thus preventing subunit addition and dissociation. In the presence of profilin, nucleates actin filaments that grow rapidly from their barbed ends. In Schizosaccharomyces pombe (strain 972 / ATCC 24843) (Fission yeast), this protein is Cell division control protein 12 (cdc12).